Reading from the N-terminus, the 189-residue chain is Peptidyl-tRNA hydrolase (189 aa).

Tyr-14 lines the tRNA pocket. His-19 acts as the Proton acceptor in catalysis. Residues Tyr-64, Asn-66, and Asn-112 each coordinate tRNA.

This sequence belongs to the PTH family. In terms of assembly, monomer.

Its subcellular location is the cytoplasm. The enzyme catalyses an N-acyl-L-alpha-aminoacyl-tRNA + H2O = an N-acyl-L-amino acid + a tRNA + H(+). Hydrolyzes ribosome-free peptidyl-tRNAs (with 1 or more amino acids incorporated), which drop off the ribosome during protein synthesis, or as a result of ribosome stalling. In terms of biological role, catalyzes the release of premature peptidyl moieties from peptidyl-tRNA molecules trapped in stalled 50S ribosomal subunits, and thus maintains levels of free tRNAs and 50S ribosomes. This chain is Peptidyl-tRNA hydrolase, found in Clostridium botulinum (strain ATCC 19397 / Type A).